We begin with the raw amino-acid sequence, 183 residues long: Adenine phosphoribosyltransferase (183 aa).

This sequence belongs to the purine/pyrimidine phosphoribosyltransferase family. Homodimer.

Its subcellular location is the cytoplasm. The enzyme catalyses AMP + diphosphate = 5-phospho-alpha-D-ribose 1-diphosphate + adenine. It participates in purine metabolism; AMP biosynthesis via salvage pathway; AMP from adenine: step 1/1. Functionally, catalyzes a salvage reaction resulting in the formation of AMP, that is energically less costly than de novo synthesis. The protein is Adenine phosphoribosyltransferase of Photorhabdus laumondii subsp. laumondii (strain DSM 15139 / CIP 105565 / TT01) (Photorhabdus luminescens subsp. laumondii).